The chain runs to 306 residues: Probable rRNA-processing protein EBP2 (306 aa).

Position 1 is an N-acetylmethionine (methionine 1). 2 disordered regions span residues 1–20 and 77–99; these read MDTPPLSDSESESDESLVTD and VPEIGGSEAPAPQNKDQKAVDPE. Threonine 3 bears the Phosphothreonine mark. Residues serine 7, serine 9, serine 11, serine 13, and serine 16 each carry the phosphoserine modification. Residue lysine 94 forms a Glycyl lysine isopeptide (Lys-Gly) (interchain with G-Cter in SUMO2) linkage. Residues 138–169 are a coiled coil; the sequence is AEMAKSDLQMQKIRQKLQTKQAAMERSEKAKQ. Glycyl lysine isopeptide (Lys-Gly) (interchain with G-Cter in SUMO2) cross-links involve residues lysine 179 and lysine 218. Residues 213–306 form a disordered region; it reads LEGDQKPLAQ…TREKMKNRTH (94 aa). 2 positions are modified to phosphoserine: serine 264 and serine 270. Basic residues predominate over residues 274-306; sequence KTAHGRGLKRPGKKGSNKRPGKRTREKMKNRTH.

It belongs to the EBP2 family. As to quaternary structure, specifically interacts with EBV EBNA1. The EBNA1-EBP2 interaction is important for the stable segregation of EBV episomes during cell division. Interacts with WDR46. In terms of tissue distribution, ubiquitous.

It localises to the nucleus. It is found in the nucleolus. Required for the processing of the 27S pre-rRNA. The polypeptide is Probable rRNA-processing protein EBP2 (EBNA1BP2) (Homo sapiens (Human)).